A 430-amino-acid polypeptide reads, in one-letter code: Glutamate-1-semialdehyde 2,1-aminomutase (430 aa).

At Lys-267 the chain carries N6-(pyridoxal phosphate)lysine.

It belongs to the class-III pyridoxal-phosphate-dependent aminotransferase family. HemL subfamily. As to quaternary structure, homodimer. Requires pyridoxal 5'-phosphate as cofactor.

Its subcellular location is the cytoplasm. It catalyses the reaction (S)-4-amino-5-oxopentanoate = 5-aminolevulinate. It functions in the pathway porphyrin-containing compound metabolism; protoporphyrin-IX biosynthesis; 5-aminolevulinate from L-glutamyl-tRNA(Glu): step 2/2. The polypeptide is Glutamate-1-semialdehyde 2,1-aminomutase (Sulfurovum sp. (strain NBC37-1)).